We begin with the raw amino-acid sequence, 460 residues long: Putative 2,3-dihydroxypropane-1-sulfonate exporter (460 aa).

At 1 to 18 (MSQTSSNPATLRLPFKEK) the chain is on the cytoplasmic side. A helical membrane pass occupies residues 19–39 (LAYGLGDLGSNILLDIGTLYL). At 40–46 (LKFYTDV) the chain is on the periplasmic side. A helical transmembrane segment spans residues 47-67 (LGLPGTYGGIIFLIAKFFTAF). Topologically, residues 68–91 (TDMGTGIMLDSRRKIGPKGKFRPF) are cytoplasmic. The helical transmembrane segment at 92 to 112 (VLYAAFPVTLLAIANFVGTPF) threads the bilayer. Over 113–122 (EVTGKTVVAT) the chain is Periplasmic. The chain crosses the membrane as a helical span at residues 123–143 (MLFMLYGLVFSMMNCSYGAMV). At 144 to 161 (PAITKNPDERASLAAWRQ) the chain is on the cytoplasmic side. The chain crosses the membrane as a helical span at residues 162–182 (GGATLGLLLCTVGFVPVMNLI). At 183-190 (EGNAQLSY) the chain is on the periplasmic side. The helical transmembrane segment at 191–211 (IFAATLFSLFGLLFMWLCYAG) threads the bilayer. Residues 212-242 (VKERYVEVKPVDSAQKPGLLQSFRAIAGNRP) are Cytoplasmic-facing. Residues 243 to 263 (LFILCIANLCTLGAFNVKLAI) form a helical membrane-spanning segment. At 264–275 (QVYYTQYVLNDP) the chain is on the periplasmic side. A helical membrane pass occupies residues 276–296 (ILLSWMGFFSMGCIFIGVFLM). The Cytoplasmic segment spans residues 297–307 (PGAVRRFGKKK). A helical membrane pass occupies residues 308-328 (VYIGGLLIWVAGDLLNYFFGG). G329 is a topological domain (periplasmic). Residues 330-350 (SVSFVAFSCLAFFGSAFVNSL) traverse the membrane as a helical segment. Residues 351 to 386 (NWALVSDTVEYGEWRTGVRSEGTVYTGFTFFRKVSQ) lie on the Cytoplasmic side of the membrane. The helical transmembrane segment at 387 to 407 (ALAGFFPGWMLTQIGYIPNVV) threads the bilayer. Over 408-418 (QSAGTVEGLRQ) the chain is Periplasmic. The chain crosses the membrane as a helical span at residues 419–439 (LIFIYPCVLAVITIIAMGCFY). At 440–460 (NLNEKMYVRIVEEIEARKHTV) the chain is on the cytoplasmic side.

The protein belongs to the sodium:galactoside symporter (TC 2.A.2) family.

The protein localises to the cell inner membrane. In terms of biological role, could be involved in the export of 2,3-dihydroxypropane-1-sulfonate (DHPS). The polypeptide is Putative 2,3-dihydroxypropane-1-sulfonate exporter (yihP) (Salmonella typhimurium (strain LT2 / SGSC1412 / ATCC 700720)).